The primary structure comprises 370 residues: DNA replication and repair protein RecF (370 aa).

30 to 37 (GQNGMGKT) is an ATP binding site.

The protein belongs to the RecF family.

The protein localises to the cytoplasm. Functionally, the RecF protein is involved in DNA metabolism; it is required for DNA replication and normal SOS inducibility. RecF binds preferentially to single-stranded, linear DNA. It also seems to bind ATP. The sequence is that of DNA replication and repair protein RecF from Bacteroides fragilis (strain YCH46).